Consider the following 336-residue polypeptide: 4-hydroxy-3-methylbut-2-enyl diphosphate reductase (336 aa).

Residue C32 participates in [4Fe-4S] cluster binding. The (2E)-4-hydroxy-3-methylbut-2-enyl diphosphate site is built by H61 and H94. H61 and H94 together coordinate dimethylallyl diphosphate. Isopentenyl diphosphate is bound by residues H61 and H94. C116 contacts [4Fe-4S] cluster. Residue H148 participates in (2E)-4-hydroxy-3-methylbut-2-enyl diphosphate binding. H148 lines the dimethylallyl diphosphate pocket. Residue H148 coordinates isopentenyl diphosphate. Catalysis depends on E150, which acts as the Proton donor. T189 is a (2E)-4-hydroxy-3-methylbut-2-enyl diphosphate binding site. Residue C219 participates in [4Fe-4S] cluster binding. The (2E)-4-hydroxy-3-methylbut-2-enyl diphosphate site is built by S247, S248, N249, and S292. Residues S247, S248, N249, and S292 each contribute to the dimethylallyl diphosphate site. Isopentenyl diphosphate is bound by residues S247, S248, N249, and S292.

The protein belongs to the IspH family. Requires [4Fe-4S] cluster as cofactor.

It catalyses the reaction isopentenyl diphosphate + 2 oxidized [2Fe-2S]-[ferredoxin] + H2O = (2E)-4-hydroxy-3-methylbut-2-enyl diphosphate + 2 reduced [2Fe-2S]-[ferredoxin] + 2 H(+). It carries out the reaction dimethylallyl diphosphate + 2 oxidized [2Fe-2S]-[ferredoxin] + H2O = (2E)-4-hydroxy-3-methylbut-2-enyl diphosphate + 2 reduced [2Fe-2S]-[ferredoxin] + 2 H(+). Its pathway is isoprenoid biosynthesis; dimethylallyl diphosphate biosynthesis; dimethylallyl diphosphate from (2E)-4-hydroxy-3-methylbutenyl diphosphate: step 1/1. The protein operates within isoprenoid biosynthesis; isopentenyl diphosphate biosynthesis via DXP pathway; isopentenyl diphosphate from 1-deoxy-D-xylulose 5-phosphate: step 6/6. Its function is as follows. Catalyzes the conversion of 1-hydroxy-2-methyl-2-(E)-butenyl 4-diphosphate (HMBPP) into a mixture of isopentenyl diphosphate (IPP) and dimethylallyl diphosphate (DMAPP). Acts in the terminal step of the DOXP/MEP pathway for isoprenoid precursor biosynthesis. This is 4-hydroxy-3-methylbut-2-enyl diphosphate reductase from Gluconobacter oxydans (strain 621H) (Gluconobacter suboxydans).